Here is a 498-residue protein sequence, read N- to C-terminus: Minor fimbrium subunit Mfa1 (498 aa).

The signal sequence occupies residues 1–19 (MKLNKMFLVGALLSLGFAS). The N-palmitoyl cysteine moiety is linked to residue C20. A lipid anchor (S-diacylglycerol cysteine) is attached at C20. A propeptide spanning residues 20 to 50 (CSKEGNGPAPDSSSTADTHMSVSMSLPQHNR) is cleaved from the precursor. The tract at residues 436-476 (SGNPFVPTDPDPNNPDTPDNPDTPDPEDPDTPNPEEPLPVQ) is disordered.

This sequence belongs to the bacteroidetes fimbrillin superfamily. FimA/Mfa1 family. As to quaternary structure, structural component of the fimbrial stalk. Minor fimbriae are composed of a structural subunit, such as the 53 kDa fimbrillin, and the accessory subunits Mfa3, Mfa4 and Mfa5. Fimbrium assembly occurs by linear, head-to-tail oligomerization of fimbrial subunits. This is mediated via insertion of a C-terminal beta-strand from one subunit into a groove in the N-terminal domain of the following subunit.

The protein resides in the fimbrium. It localises to the cell outer membrane. Its function is as follows. Structural subunit of the minor fimbriae. These filamentous pili are attached to the cell surface; they mediate biofilm formation, adhesion onto host cells and onto other bacteria that are part of the oral microbiome. They play an important role in invasion of periodontal tissues and are recognized as major virulence factors. Mfa1 orthologs from different strains have highly divergent sequences, and this correlates with pathogenicity. The polypeptide is Minor fimbrium subunit Mfa1 (Porphyromonas gingivalis (Bacteroides gingivalis)).